Reading from the N-terminus, the 107-residue chain is U1-lycotoxin-Ls1g (107 aa).

The N-terminal stretch at 1-20 (MMKVLVVVALLVTLISYSSS) is a signal peptide. The propeptide occupies 21–41 (EGIDDLEADELLSLMANEQTR). Disulfide bonds link Cys51/Cys68, Cys58/Cys86, and Cys70/Cys84.

This sequence belongs to the neurotoxin 19 (CSTX) family. 04 (U1-Lctx) subfamily. As to expression, expressed by the venom gland.

It localises to the secreted. This chain is U1-lycotoxin-Ls1g, found in Lycosa singoriensis (Wolf spider).